The sequence spans 577 residues: Thrombomodulin (577 aa).

A signal peptide spans 1–16 (MLGIFFLGVLAPASLG). Over 17–517 (LSALAKLQPT…GPPSARPVHS (501 aa)) the chain is Extracellular. The C-type lectin domain occupies 31–167 (VEHECFALFQ…TETQGFLCEF (137 aa)). N-linked (GlcNAc...) asparagine glycosylation occurs at N113. C135 and C156 are joined by a disulfide. 2 consecutive EGF-like domains span residues 240-280 (GAWN…RSCA) and 283-323 (VVQS…HRCE). The N-linked (GlcNAc...) asparagine glycan is linked to N243. 18 disulfides stabilise this stretch: C244-C255, C251-C264, C266-C279, C287-C295, C291-C307, C309-C322, C328-C339, C335-C348, C350-C361, C368-C377, C373-C387, C389-C403, C407-C416, C412-C424, C426-C438, C444-C454, C449-C463, and C465-C479. A glycan (N-linked (GlcNAc...) asparagine) is linked at N256. The EGF-like 3; calcium-binding domain occupies 324 to 362 (DVDDCKQGPNPCPQLCVNTKGGFECFCYDGYELVDGECV). EGF-like domains lie at 364 to 404 (LLDP…HKCE) and 403 to 439 (CEMFCNETSCPADCDPNSPTVCECPEGFILDEGSVCT). N-linked (GlcNAc...) asparagine glycosylation occurs at N408. The EGF-like 6; calcium-binding domain maps to 440 to 480 (DIDECSQGECFTSECRNFPGSYECICGPDTALAGQISKDCD). Residues 476 to 513 (SKDCDPIPVREDTKEEEGSGEPPVSPTPGSPTGPPSAR) form a disordered region. Positions 477 to 492 (KDCDPIPVREDTKEEE) are enriched in basic and acidic residues. An O-linked (Xyl...) (chondroitin sulfate) serine glycan is attached at S494. The segment covering 498 to 512 (PVSPTPGSPTGPPSA) has biased composition (pro residues). A helical transmembrane segment spans residues 518 to 541 (GVLIGISIASLSLVVALLALLCHL). At 542–577 (RKKQGAARAELEYKCASSAKEVVLQHVRTDRTLQKF) the chain is on the cytoplasmic side.

In terms of assembly, interacts with ITGAL, ITGAM and ITGB2. Interacts with thrombin/F2; this interaction switches the specificity of thrombin from a procoagulant to an anticoagulant and antifibrinolytic protease. Interacts with ANGP1 and ANGP2; these interactions significantly inhibit the generation of activated PC and TAFIa/CPB2 by the thrombin/thrombomodulin complex. Interacts with PF4; this interaction enhances generation of activated protein C. Interacts with HMGB1; this interaction inhibits HMGB1 inflammatory activity. Endothelial cells are unique in synthesizing thrombomodulin.

It is found in the membrane. Endothelial cell receptor that plays a critical role in regulating several physiological processes including hemostasis, coagulation, fibrinolysis, inflammation, and angiogenesis. Acts as a cofactor for thrombin activation of protein C/PROC on the surface of vascular endothelial cells leading to initiation of the activated protein C anticoagulant pathway. Also accelerates the activation of the plasma carboxypeptidase B2/CPB2, which catalyzes removal of C-terminal basic amino acids from its substrates including kinins or anaphylatoxins leading to fibrinolysis inhibition. Plays critical protective roles in changing the cleavage specificity of protease-activated receptor 1/PAR1, inhibiting endothelial cell permeability and inflammation. Suppresses inflammation distinctly from its anticoagulant cofactor activity by sequestering HMGB1 thereby preventing it from engaging cellular receptors such as RAGE and contributing to the inflammatory response. The protein is Thrombomodulin (Thbd) of Mus musculus (Mouse).